Here is a 469-residue protein sequence, read N- to C-terminus: Glutamate--tRNA ligase (469 aa).

Residues 11–21 carry the 'HIGH' region motif; it reads PSPTGFIHLGN. Residues 114 to 131 are compositionally biased toward basic and acidic residues; sequence QREAGEKPRYDGTWRPEP. The segment at 114–139 is disordered; it reads QREAGEKPRYDGTWRPEPGKVLPEPP. The short motif at 243–247 is the 'KMSKS' region element; that stretch reads KMSKR. Lys-246 is an ATP binding site.

The protein belongs to the class-I aminoacyl-tRNA synthetase family. Glutamate--tRNA ligase type 1 subfamily. In terms of assembly, monomer.

The protein resides in the cytoplasm. The catalysed reaction is tRNA(Glu) + L-glutamate + ATP = L-glutamyl-tRNA(Glu) + AMP + diphosphate. In terms of biological role, catalyzes the attachment of glutamate to tRNA(Glu) in a two-step reaction: glutamate is first activated by ATP to form Glu-AMP and then transferred to the acceptor end of tRNA(Glu). The chain is Glutamate--tRNA ligase from Paraburkholderia xenovorans (strain LB400).